The chain runs to 376 residues: Chaperone protein DnaJ (376 aa).

Positions 5–70 constitute a J domain; the sequence is DYYEVLGVAR…NKRRAYDAHG (66 aa). The segment at 132-209 adopts a CR-type zinc-finger fold; that stretch reads GIERRIEIPT…CHGAGRVEEN (78 aa). Residues C145, C148, C161, C164, C183, C186, C197, and C200 each coordinate Zn(2+). 4 CXXCXGXG motif repeats span residues 145-152, 161-168, 183-190, and 197-204; these read CVSCHGSG, CGTCHGRG, CPHCDGRG, and CKTCHGAG.

It belongs to the DnaJ family. In terms of assembly, homodimer. Requires Zn(2+) as cofactor.

It localises to the cytoplasm. Participates actively in the response to hyperosmotic and heat shock by preventing the aggregation of stress-denatured proteins and by disaggregating proteins, also in an autonomous, DnaK-independent fashion. Unfolded proteins bind initially to DnaJ; upon interaction with the DnaJ-bound protein, DnaK hydrolyzes its bound ATP, resulting in the formation of a stable complex. GrpE releases ADP from DnaK; ATP binding to DnaK triggers the release of the substrate protein, thus completing the reaction cycle. Several rounds of ATP-dependent interactions between DnaJ, DnaK and GrpE are required for fully efficient folding. Also involved, together with DnaK and GrpE, in the DNA replication of plasmids through activation of initiation proteins. In Xanthomonas oryzae pv. oryzae (strain PXO99A), this protein is Chaperone protein DnaJ.